Reading from the N-terminus, the 478-residue chain is MNILFAVSECVPFIKSGGLADVAGALPKELKKLGVNVRIMLPNYSLIPANLRESFKLHKVIHVPLGWRNQYCGILKGEQDGITYYLIDNEYYFKRDSLYGHYDDGERFSFFSKAILESIPYLDFEVDLIHSHDWHTAMVNFLLHEKYKDNPLYEKIKTVYTIHNLQFQGVFPREVIHDLLELGDEYFNSEQLEFYGNINFMKGGIIAADHITTVSSTYKEEIQYEFFGEKLDGLLRKYNDKLSGIVNGIDTSVYNPRLDSYITATYDVDTLYAKRENKWALQHYFGLPEKENTPIISMVTRLTKQKGLDLVRAVFQEIMQEDVQCIILGSGDSEYEQFFEWMAYEYSEKVKVYIGFNEELAHQVYAGSDLFLMPSLFEPCGLGQLIALTYGVIPIVRETGGLNDTVKSYHVETKSGNGFTFTNFNAHDMLYTVRRALRYYEDPAVWNQLVKQAMTEDHSWKTSALAYKDLYNRLLKLS.

Residue Lys-15 participates in ADP-alpha-D-glucose binding.

The protein belongs to the glycosyltransferase 1 family. Bacterial/plant glycogen synthase subfamily.

The enzyme catalyses [(1-&gt;4)-alpha-D-glucosyl](n) + ADP-alpha-D-glucose = [(1-&gt;4)-alpha-D-glucosyl](n+1) + ADP + H(+). It functions in the pathway glycan biosynthesis; glycogen biosynthesis. Synthesizes alpha-1,4-glucan chains using ADP-glucose. This chain is Glycogen synthase, found in Bacillus cytotoxicus (strain DSM 22905 / CIP 110041 / 391-98 / NVH 391-98).